The primary structure comprises 284 residues: MDAIKKKMQAMKLEKDNAMDKADTLEQQNKEANLRAEKTEEEIRANQKKSQLVENELDHAQEQLSAATHKLVEKEKAFANAEGEVAALNRRIQLLEEDLERSEERLNTATTKLAEASQAADESERMRKVLENRSLSDEERMDALENQLKEARFLAEEADRKYDEVARKLAMVEADLERAEERAESGESKIVELEEELRVVGNNLKSLEVSEEKANQREETYKEQIKTLANKLKAAEARAEFAERSVQKLQKEVDRLEDELVNEKEKYKNIADEMDQAFSELSGF.

N-acetylmethionine is present on Met1. Disordered regions lie at residues 1–49 and 103–126; these read MDAI…NQKK and EERLNTATTKLAEASQAADESERM. A coiled-coil region spans residues 1–284; the sequence is MDAIKKKMQA…DQAFSELSGF (284 aa). Residues 12–45 show a composition bias toward basic and acidic residues; that stretch reads KLEKDNAMDKADTLEQQNKEANLRAEKTEEEIRA.

Belongs to the tropomyosin family. In terms of assembly, homodimer. As to expression, expressed in leg muscle and chest protection muscle (at protein level).

Its function is as follows. Tropomyosin, in association with the troponin complex, plays a central role in the calcium dependent regulation of muscle contraction. This chain is Tropomyosin, found in Chionoecetes opilio (Atlantic snow crab).